The following is a 236-amino-acid chain: Phosphoribosylaminoimidazole-succinocarboxamide synthase (236 aa).

This sequence belongs to the SAICAR synthetase family.

It carries out the reaction 5-amino-1-(5-phospho-D-ribosyl)imidazole-4-carboxylate + L-aspartate + ATP = (2S)-2-[5-amino-1-(5-phospho-beta-D-ribosyl)imidazole-4-carboxamido]succinate + ADP + phosphate + 2 H(+). It functions in the pathway purine metabolism; IMP biosynthesis via de novo pathway; 5-amino-1-(5-phospho-D-ribosyl)imidazole-4-carboxamide from 5-amino-1-(5-phospho-D-ribosyl)imidazole-4-carboxylate: step 1/2. In Hahella chejuensis (strain KCTC 2396), this protein is Phosphoribosylaminoimidazole-succinocarboxamide synthase.